Here is a 141-residue protein sequence, read N- to C-terminus: Large ribosomal subunit protein uL11 (141 aa).

This sequence belongs to the universal ribosomal protein uL11 family. As to quaternary structure, part of the ribosomal stalk of the 50S ribosomal subunit. Interacts with L10 and the large rRNA to form the base of the stalk. L10 forms an elongated spine to which L12 dimers bind in a sequential fashion forming a multimeric L10(L12)X complex. One or more lysine residues are methylated.

Its function is as follows. Forms part of the ribosomal stalk which helps the ribosome interact with GTP-bound translation factors. The protein is Large ribosomal subunit protein uL11 of Chloroflexus aggregans (strain MD-66 / DSM 9485).